A 429-amino-acid polypeptide reads, in one-letter code: Methylenetetrahydrofolate--tRNA-(uracil-5-)-methyltransferase TrmFO (429 aa).

Residue 7-12 (GAGLAG) coordinates FAD.

Belongs to the MnmG family. TrmFO subfamily. FAD serves as cofactor.

The protein resides in the cytoplasm. The enzyme catalyses uridine(54) in tRNA + (6R)-5,10-methylene-5,6,7,8-tetrahydrofolate + NADH + H(+) = 5-methyluridine(54) in tRNA + (6S)-5,6,7,8-tetrahydrofolate + NAD(+). It carries out the reaction uridine(54) in tRNA + (6R)-5,10-methylene-5,6,7,8-tetrahydrofolate + NADPH + H(+) = 5-methyluridine(54) in tRNA + (6S)-5,6,7,8-tetrahydrofolate + NADP(+). In terms of biological role, catalyzes the folate-dependent formation of 5-methyl-uridine at position 54 (M-5-U54) in all tRNAs. The polypeptide is Methylenetetrahydrofolate--tRNA-(uracil-5-)-methyltransferase TrmFO (Thermosipho africanus (strain TCF52B)).